Reading from the N-terminus, the 245-residue chain is tRNA1(Val) (adenine(37)-N6)-methyltransferase (245 aa).

This sequence belongs to the methyltransferase superfamily. tRNA (adenine-N(6)-)-methyltransferase family.

Its subcellular location is the cytoplasm. It carries out the reaction adenosine(37) in tRNA1(Val) + S-adenosyl-L-methionine = N(6)-methyladenosine(37) in tRNA1(Val) + S-adenosyl-L-homocysteine + H(+). Specifically methylates the adenine in position 37 of tRNA(1)(Val) (anticodon cmo5UAC). The sequence is that of tRNA1(Val) (adenine(37)-N6)-methyltransferase from Shigella sonnei (strain Ss046).